A 409-amino-acid polypeptide reads, in one-letter code: Arginine deiminase (409 aa).

Cys399 (amidino-cysteine intermediate) is an active-site residue.

Belongs to the arginine deiminase family.

It is found in the cytoplasm. The enzyme catalyses L-arginine + H2O = L-citrulline + NH4(+). The protein operates within amino-acid degradation; L-arginine degradation via ADI pathway; carbamoyl phosphate from L-arginine: step 1/2. This Streptococcus pneumoniae serotype 19F (strain G54) protein is Arginine deiminase.